The primary structure comprises 272 residues: Undecaprenyl-diphosphatase (272 aa).

The next 7 helical transmembrane spans lie at Ser-6–Ser-26, Ala-45–Trp-65, Thr-92–Ile-112, Leu-115–Ala-135, Tyr-189–Leu-209, Ala-221–Ile-241, and Ile-251–Phe-271.

It belongs to the UppP family.

It is found in the cell inner membrane. It catalyses the reaction di-trans,octa-cis-undecaprenyl diphosphate + H2O = di-trans,octa-cis-undecaprenyl phosphate + phosphate + H(+). Its function is as follows. Catalyzes the dephosphorylation of undecaprenyl diphosphate (UPP). Confers resistance to bacitracin. The polypeptide is Undecaprenyl-diphosphatase (Pectobacterium atrosepticum (strain SCRI 1043 / ATCC BAA-672) (Erwinia carotovora subsp. atroseptica)).